Consider the following 328-residue polypeptide: MEKSIWLLACLAWVLPTGSFVRTKIDTTENLLNTEVHSSPAQRWSMQVPPEVSAEAGDAAVLPCTFTHPHRHYDGPLTAIWRAGEPYAGPQVFRCAAARGSELCQTALSLHGRFRLLGNPRRNDLSLRVERLALADDRRYFCRVEFAGDVHDRYESRHGVRLHVTAAPRIVNISVLPSPAHAFRALCTAEGEPPPALAWSGPALGNSLAAVRSPREGHGHLVTAELPALTHDGRYTCTAANSLGRSEASVYLFRFHGASGASTVALLLGALGFKALLLLGVLAARAARRRPEHLDTPDTPPRSQAQESNYENLSQMNPRSPPATMCSP.

The first 19 residues, 1 to 19 (MEKSIWLLACLAWVLPTGS), serve as a signal peptide directing secretion. Residues 20-263 (FVRTKIDTTE…RFHGASGAST (244 aa)) lie on the Extracellular side of the membrane. Residues 40 to 158 (PAQRWSMQVP…DVHDRYESRH (119 aa)) enclose the Ig-like V-type domain. 2 cysteine pairs are disulfide-bonded: Cys64/Cys142 and Cys95/Cys104. Arg143 contacts N-acetylneuraminate. The Ig-like C2-type domain occupies 168-251 (PRIVNISVLP…SLGRSEASVY (84 aa)). Residue Asn172 is glycosylated (N-linked (GlcNAc...) asparagine). Cysteines 187 and 237 form a disulfide. Residues 264 to 284 (VALLLGALGFKALLLLGVLAA) traverse the membrane as a helical segment. Over 285 to 328 (RAARRRPEHLDTPDTPPRSQAQESNYENLSQMNPRSPPATMCSP) the chain is Cytoplasmic. The interval 289–328 (RRPEHLDTPDTPPRSQAQESNYENLSQMNPRSPPATMCSP) is disordered. Residues 301–318 (PRSQAQESNYENLSQMNP) are compositionally biased toward polar residues.

This sequence belongs to the immunoglobulin superfamily. SIGLEC (sialic acid binding Ig-like lectin) family. As to quaternary structure, interacts with TYROBP and HCST. As to expression, expressed in macrophage and/or dendritic cells of spleen and lymph nodes.

The protein localises to the membrane. In terms of biological role, binds sialylated glycoproteins. The protein is Sialic acid-binding Ig-like lectin 15 (SIGLEC15) of Homo sapiens (Human).